We begin with the raw amino-acid sequence, 390 residues long: Protein-glutamate methylesterase/protein-glutamine glutaminase (390 aa).

In terms of domain architecture, Response regulatory spans 4–121 (RALVVDDSGF…SGDMEQVKRQ (118 aa)). Asp-55 carries the 4-aspartylphosphate modification. The disordered stretch occupies residues 130–198 (GGGRGAPAGR…AAPAPERGQR (69 aa)). 2 stretches are compositionally biased toward low complexity: residues 136–148 (PAGR…APVD) and 179–193 (EAPV…APAP). Positions 201 to 390 (PGALRLVVIG…QVGEELAKLR (190 aa)) constitute a CheB-type methylesterase domain. Residues Ser-212, His-239, and Asp-335 contribute to the active site.

Belongs to the CheB family. In terms of processing, phosphorylated by CheA. Phosphorylation of the N-terminal regulatory domain activates the methylesterase activity.

Its subcellular location is the cytoplasm. It carries out the reaction [protein]-L-glutamate 5-O-methyl ester + H2O = L-glutamyl-[protein] + methanol + H(+). The enzyme catalyses L-glutaminyl-[protein] + H2O = L-glutamyl-[protein] + NH4(+). In terms of biological role, involved in chemotaxis. Part of a chemotaxis signal transduction system that modulates chemotaxis in response to various stimuli. Catalyzes the demethylation of specific methylglutamate residues introduced into the chemoreceptors (methyl-accepting chemotaxis proteins or MCP) by CheR. Also mediates the irreversible deamidation of specific glutamine residues to glutamic acid. This chain is Protein-glutamate methylesterase/protein-glutamine glutaminase, found in Alkalilimnicola ehrlichii (strain ATCC BAA-1101 / DSM 17681 / MLHE-1).